The primary structure comprises 270 residues: MAVGIFDSGLGGLTVLDAVTKALPDVPLIYMGDNAHTPYGVREADDIYDLTTAGVQHLFDRGCDLVILACNTASAAALRRMQEGWVPEGKRVLGVFVPLIEALTERQWGDNSPPREVDVKEVALFATPTTVSSRAFQRELAFRAIGVDVEAQPCGGVVDAIEDGDMILAEALVRSHVDALKRRMPNPQAAILGCTHYPLVEDVFRAALGDGVAVFSQPSLVADSLGDYLKRRPEMLGSGEPAFLTTGDPKSVEAKATIFLRRKITFEAVG.

Substrate-binding positions include 7 to 8 (DS) and 39 to 40 (YG). C70 (proton donor/acceptor) is an active-site residue. 71 to 72 (NT) is a substrate binding site. Residue C194 is the Proton donor/acceptor of the active site. 195–196 (TH) lines the substrate pocket.

The protein belongs to the aspartate/glutamate racemases family.

It carries out the reaction L-glutamate = D-glutamate. Its pathway is cell wall biogenesis; peptidoglycan biosynthesis. Functionally, provides the (R)-glutamate required for cell wall biosynthesis. This Jannaschia sp. (strain CCS1) protein is Glutamate racemase.